The chain runs to 202 residues: Arenicin-2 (202 aa).

The signal sequence occupies residues 1-25 (MTSTQSVAVYATLILAIFCFNDIHC). Positions 26–181 (DPIAEARAAA…SGDNNEPEKR (156 aa)) are excised as a propeptide. Residues 73–168 (GDGVEGSVMV…ACQGKSVYWL (96 aa)) form the BRICHOS domain. 2 cysteine pairs are disulfide-bonded: cysteine 100-cysteine 160 and cysteine 184-cysteine 201.

In terms of biological role, has antimicrobial activity against the Gram-negative bacteria E.coli and P.mirabilis, the Gram-positive bacterium L.monocytogenes and the yeast C.albicans. The sequence is that of Arenicin-2 from Arenicola marina (Lugworm).